Consider the following 1160-residue polypeptide: AF4/FMR2 family member 4 (1160 aa).

Positions 1 to 19 (MNREDRNVLRMKERERRNQ) are enriched in basic and acidic residues. Disordered stretches follow at residues 1–42 (MNRE…YKVT), 78–289 (PKPA…SKAH), 322–908 (WPPP…FDDR), and 1031–1070 (NSYS…SSGG). The span at 115 to 128 (PSTSQSQKRSSALQ) shows a compositional bias: polar residues. S120 bears the Phosphoserine mark. Over residues 172 to 189 (RSSSPGKPQAVSSLSSSH) the composition is skewed to low complexity. The span at 193 to 212 (HGNDHHSKEHQRSKSPRDPD) shows a compositional bias: basic and acidic residues. The residue at position 207 (S207) is a Phosphoserine. Residues 229-247 (SSQSFPPSLMSKSSSMLQK) are compositionally biased toward low complexity. Polar residues-rich tracts occupy residues 268 to 280 (EHYS…NSMT) and 360 to 370 (YSTAKTSNGHQ). Phosphoserine occurs at positions 382, 383, 384, and 387. A compositionally biased stretch (polar residues) spans 398-407 (PRSTPGSNSE). Positions 408–424 (PSHHNSEGADNSRDDSS) are enriched in basic and acidic residues. A compositionally biased stretch (low complexity) spans 425–457 (SHSGSESSSGSDSESESSSSDSEANEPSQSASP). A phosphoserine mark is found at S482, S485, and S486. Composition is skewed to polar residues over residues 483 to 496 (PASS…SSQA), 505 to 523 (GTAS…SSAT), and 544 to 555 (SPAQSDSTTQRR). S544 carries the post-translational modification Phosphoserine. Residues 563–581 (KKPEKSAAEEPRGGLKIES) are compositionally biased toward basic and acidic residues. K578 is covalently cross-linked (Glycyl lysine isopeptide (Lys-Gly) (interchain with G-Cter in SUMO2)). Residues 594–607 (SRHKAATKGSRKPN) show a composition bias toward basic residues. Residues 608 to 622 (IKKESKSSPRPTAEK) are compositionally biased toward basic and acidic residues. Residues 641–657 (TDTSSSDSDGSESLPPS) are compositionally biased toward low complexity. S666 bears the Phosphoserine mark. Position 669 is a phosphothreonine (T669). Residues S675, S689, S698, and S701 each carry the phosphoserine modification. Residue Y707 is modified to Phosphotyrosine. 3 stretches are compositionally biased toward basic and acidic residues: residues 725 to 756 (PYKE…EKAS), 764 to 784 (KNDD…DKNS), and 794 to 806 (ESSK…EKDL). Phosphoserine is present on S809. Position 817 is an N6-acetyllysine (K817). Position 831 is a phosphoserine (S831). Composition is skewed to low complexity over residues 831–859 (SQSS…SSTA) and 880–895 (PNSS…TSES). Phosphoserine occurs at positions 1040, 1052, 1055, and 1059. Over residues 1059-1070 (SPGNSGSYSSGG) the composition is skewed to low complexity.

It belongs to the AF4 family. In terms of assembly, component of the super elongation complex (SEC), at least composed of EAF1, EAF2, CDK9, MLLT3/AF9, AFF (AFF1 or AFF4), the P-TEFb complex and ELL (ELL, ELL2 or ELL3). Interacts with ELL2; the interaction is direct and leads to stabilize ELL2 and prevent ELL2 ubiquitination and degradation. Interacts with ELL3; the interaction is direct. Dephosphorylated at Ser-544 by the PNUTS-PP1 complex, promoting RNA polymerase II transcription pause-release. In terms of tissue distribution, highly expressed in testis by Sertoli cells, and at low levels in other tissues.

The protein localises to the nucleus. Its subcellular location is the chromosome. Functionally, key component of the super elongation complex (SEC), a complex required to increase the catalytic rate of RNA polymerase II transcription by suppressing transient pausing by the polymerase at multiple sites along the DNA. In the SEC complex, AFF4 acts as a central scaffold that recruits other factors through direct interactions with ELL proteins (ELL, ELL2 or ELL3) and the P-TEFb complex. The chain is AF4/FMR2 family member 4 (Aff4) from Mus musculus (Mouse).